A 165-amino-acid polypeptide reads, in one-letter code: Xanthine-guanine phosphoribosyltransferase (165 aa).

Residues 41-42 and 98-106 contribute to the 5-phospho-alpha-D-ribose 1-diphosphate site; these read RG and DDLTDTGKT. Asp-99 lines the Mg(2+) pocket. Asp-102 and Ile-145 together coordinate guanine. 2 residues coordinate xanthine: Asp-102 and Ile-145. Residues 102–106 and 144–145 contribute to the GMP site; these read DTGKT and WI.

The protein belongs to the purine/pyrimidine phosphoribosyltransferase family. XGPT subfamily. In terms of assembly, homotetramer. The cofactor is Mg(2+).

The protein resides in the cell inner membrane. The enzyme catalyses GMP + diphosphate = guanine + 5-phospho-alpha-D-ribose 1-diphosphate. It carries out the reaction XMP + diphosphate = xanthine + 5-phospho-alpha-D-ribose 1-diphosphate. It catalyses the reaction IMP + diphosphate = hypoxanthine + 5-phospho-alpha-D-ribose 1-diphosphate. It functions in the pathway purine metabolism; GMP biosynthesis via salvage pathway; GMP from guanine: step 1/1. It participates in purine metabolism; XMP biosynthesis via salvage pathway; XMP from xanthine: step 1/1. Functionally, purine salvage pathway enzyme that catalyzes the transfer of the ribosyl-5-phosphate group from 5-phospho-alpha-D-ribose 1-diphosphate (PRPP) to the N9 position of the 6-oxopurines guanine and xanthine to form the corresponding ribonucleotides GMP (guanosine 5'-monophosphate) and XMP (xanthosine 5'-monophosphate), with the release of PPi. To a lesser extent, also acts on hypoxanthine. The sequence is that of Xanthine-guanine phosphoribosyltransferase from Brucella suis (strain ATCC 23445 / NCTC 10510).